Consider the following 274-residue polypeptide: Large ribosomal subunit protein uL2 (274 aa).

The segment at 223-274 is disordered; it reads VVMNPVDHPHGGGEGRTSGGRHPVSPWGVPTKGFKTRKNKRTDKYIVRRRTK. Over residues 256-274 the composition is skewed to basic residues; it reads FKTRKNKRTDKYIVRRRTK.

The protein belongs to the universal ribosomal protein uL2 family. In terms of assembly, part of the 50S ribosomal subunit. Forms a bridge to the 30S subunit in the 70S ribosome.

In terms of biological role, one of the primary rRNA binding proteins. Required for association of the 30S and 50S subunits to form the 70S ribosome, for tRNA binding and peptide bond formation. It has been suggested to have peptidyltransferase activity; this is somewhat controversial. Makes several contacts with the 16S rRNA in the 70S ribosome. The polypeptide is Large ribosomal subunit protein uL2 (Vibrio atlanticus (strain LGP32) (Vibrio splendidus (strain Mel32))).